The primary structure comprises 379 residues: Glutamate 5-kinase (379 aa).

K19 is an ATP binding site. Positions 59, 146, and 158 each coordinate substrate. ATP-binding positions include 178 to 179 (TD) and 220 to 226 (TGGMATK). The 79-residue stretch at 285–363 (SGDIVIDQGA…KDIISILGYD (79 aa)) folds into the PUA domain.

It belongs to the glutamate 5-kinase family.

It localises to the cytoplasm. The catalysed reaction is L-glutamate + ATP = L-glutamyl 5-phosphate + ADP. It functions in the pathway amino-acid biosynthesis; L-proline biosynthesis; L-glutamate 5-semialdehyde from L-glutamate: step 1/2. Its function is as follows. Catalyzes the transfer of a phosphate group to glutamate to form L-glutamate 5-phosphate. In Vibrio vulnificus (strain YJ016), this protein is Glutamate 5-kinase.